Consider the following 96-residue polypeptide: Large ribosomal subunit protein bL25 (96 aa).

It belongs to the bacterial ribosomal protein bL25 family. In terms of assembly, part of the 50S ribosomal subunit; part of the 5S rRNA/L5/L18/L25 subcomplex. Contacts the 5S rRNA. Binds to the 5S rRNA independently of L5 and L18.

Its function is as follows. This is one of the proteins that binds to the 5S RNA in the ribosome where it forms part of the central protuberance. This Francisella philomiragia subsp. philomiragia (strain ATCC 25017 / CCUG 19701 / FSC 153 / O#319-036) protein is Large ribosomal subunit protein bL25.